The primary structure comprises 245 residues: 6-carboxyhexanoate--CoA ligase (245 aa).

It belongs to the BioW family. In terms of assembly, homodimer. It depends on Mg(2+) as a cofactor.

The catalysed reaction is heptanedioate + ATP + CoA = 6-carboxyhexanoyl-CoA + AMP + diphosphate. Its pathway is metabolic intermediate metabolism; pimeloyl-CoA biosynthesis; pimeloyl-CoA from pimelate: step 1/1. Its function is as follows. Catalyzes the transformation of pimelate into pimeloyl-CoA with concomitant hydrolysis of ATP to AMP. The sequence is that of 6-carboxyhexanoate--CoA ligase from Methanococcus vannielii (strain ATCC 35089 / DSM 1224 / JCM 13029 / OCM 148 / SB).